Reading from the N-terminus, the 230-residue chain is Ureidoacrylate amidohydrolase RutB (230 aa).

Residue D24 is the Proton acceptor of the active site. K133 is a catalytic residue. Catalysis depends on C166, which acts as the Nucleophile.

It belongs to the isochorismatase family. RutB subfamily.

The enzyme catalyses (Z)-3-ureidoacrylate + H2O + H(+) = (Z)-3-aminoacrylate + NH4(+) + CO2. It catalyses the reaction (Z)-3-ureidoacrylate + H2O = (Z)-3-aminoacrylate + carbamate + H(+). It carries out the reaction (Z)-2-methylureidoacrylate + H2O + H(+) = (Z)-2-methylaminoacrylate + NH4(+) + CO2. In terms of biological role, hydrolyzes ureidoacrylate to form aminoacrylate and carbamate. The carbamate hydrolyzes spontaneously, thereby releasing one of the nitrogen atoms of the pyrimidine ring as ammonia and one of its carbon atoms as CO2. This is Ureidoacrylate amidohydrolase RutB from Escherichia coli O44:H18 (strain 042 / EAEC).